The sequence spans 81 residues: Protein Vpu (81 aa).

At M1–V7 the chain is on the extracellular side. The chain crosses the membrane as a helical span at residues A8 to I28. Residues E29 to L81 are Cytoplasmic-facing. The interval E50–L81 is disordered. Positions N53–E63 are enriched in acidic residues. S57 carries the post-translational modification Phosphoserine; by host CK2.

The protein belongs to the HIV-1 VPU protein family. In terms of assembly, homopentamer. Interacts with host CD4 and BRTC; these interactions induce proteasomal degradation of CD4. Interacts with host BST2; this interaction leads to the degradation of host BST2. Interacts with host FBXW11. Interacts with host AP1M1; this interaction plays a role in the mistrafficking and subsequent degradation of host BST2. Interacts with host RANBP2; this interaction allows Vpu to down-regulate host BLM sumoylation. Post-translationally, phosphorylated by host CK2. This phosphorylation is necessary for interaction with human BTRC and degradation of CD4.

The protein resides in the host membrane. Ion channel activity is inhibited by hexamethylene amiloride in vitro. In terms of biological role, enhances virion budding by targeting host CD4 and Tetherin/BST2 to proteasome degradation. Degradation of CD4 prevents any unwanted premature interactions between viral Env and its host receptor CD4 in the endoplasmic reticulum. Degradation of antiretroviral protein Tetherin/BST2 is important for virion budding, as BST2 tethers new viral particles to the host cell membrane. Mechanistically, Vpu bridges either CD4 or BST2 to BTRC, a substrate recognition subunit of the Skp1/Cullin/F-box protein E3 ubiquitin ligase, induces their ubiquitination and subsequent proteasomal degradation. The alteration of the E3 ligase specificity by Vpu seems to promote the degradation of host IKBKB, leading to NF-kappa-B down-regulation and subsequent apoptosis. Acts as a viroporin that forms an oligomeric ion channel in membranes. Modulates the host DNA repair mechanisms to promote degradation of nuclear viral cDNA in cells that are already productively infected in order to suppress immune sensing and proviral hyper-integration (superinfection). Manipulates PML-NBs and modulates SUMOylation of host BLM protein thereby enhancing its DNA-end processing activity toward viral unintegrated linear DNA. Also inhibits RAD52-mediated homologous repair of viral cDNA, preventing the generation of dead-end circular forms of single copies of the long terminal repeat and permitting sustained nucleolytic attack. The chain is Protein Vpu from Homo sapiens (Human).